The sequence spans 581 residues: Pre-mRNA 3'-end-processing factor FIP1 (581 aa).

Basic and acidic residues-rich tracts occupy residues 1–10 and 32–42; these read MSAGEVERLV and VHVHSDLAKDL. Disordered stretches follow at residues 1-95, 211-282, and 320-581; these read MSAG…EDDV, TVQQ…ESPD, and RSAT…APAE. The sufficient for interaction with PAPOLA stretch occupies residues 1 to 110; it reads MSAGEVERLV…DIKTGAPQYG (110 aa). A necessary for stimulating PAPOLA activity region spans residues 1–332; sequence MSAGEVERLV…TEVDNNFSKP (332 aa). 2 stretches are compositionally biased toward acidic residues: residues 43-54 and 80-94; these read DENEVERPEEEN and TEDDSDSDSDDDEDD. A phosphoserine mark is found at Ser-84, Ser-86, and Ser-88. Residues 136–219 form a sufficient for interaction with CPSF4 region; sequence KGVDLDAPGS…ITVQQGRTGN (84 aa). Residues 247-267 are compositionally biased toward low complexity; the sequence is SRNSTSSQSQTSTASRKASSS. The segment covering 271 to 282 has biased composition (basic and acidic residues); sequence WQDRYGRAESPD. Ser-280 carries the post-translational modification Phosphoserine. Residues 320–330 are compositionally biased toward polar residues; sequence RSATEVDNNFS. Positions 331-389 are enriched in pro residues; sequence KPPPFFPPGAPPTHLPPPPFLPPPPTVSTAPPLIPPPGIPITVPPPGFPPPPGAPPPSL. Phosphotyrosine is present on Tyr-411. Over residues 419-435 the composition is skewed to polar residues; sequence LTSSAPSWPSLVDTTKQ. The interval 428–581 is sufficient for interaction with CPSF1 and CSTF3; that stretch reads SLVDTTKQWD…QESTEAAPAE (154 aa). Residues 439 to 479 are compositionally biased toward basic and acidic residues; it reads YARREKDRDRDRERDRDRERERDRDRERERTRERERERDHS. The interval 442-477 is arg/Asp/Glu-rich domain; it reads REKDRDRDRERDRDRERERDRDRERERTRERERERD. Residues 478–535 are sufficient for interaction with AHCYL1; it reads HSPTPSVFNSDEERYRYREYAERGYERHRASREKEERHRERRHREKEETRHKSSRSNS. Ser-479 carries the post-translational modification Phosphoserine. At Thr-481 the chain carries Phosphothreonine. A phosphoserine mark is found at Ser-483 and Ser-487. Residues 488–515 show a composition bias toward basic and acidic residues; sequence DEERYRYREYAERGYERHRASREKEERH. Residues 529–538 show a composition bias toward basic residues; it reads KSSRSNSRRR. Ser-541 bears the Phosphoserine mark. Residues 547-557 show a composition bias toward basic residues; it reads HRRHKHKKSKR.

It belongs to the FIP1 family. Component of the cleavage and polyadenylation specificity factor (CPSF) complex, composed of CPSF1, CPSF2, CPSF3, CPSF4 and FIP1L1. Found in a complex with CPSF1, FIP1L1 and PAPOLA. Interacts with CPSF1, CPSF4, CSTF2 and CSTF3. Interacts with AHCYL1 (when phosphorylated); the interaction is direct and associates AHCYL1 with the CPSF complex and RNA. Interacts with PAPOLA; the interaction seems to be increased by the interaction with AHCYL1. Interacts with NUDT21/CPSF5; this interaction occurs in a RNA sequence-specific manner. Interacts (preferentially via unphosphorylated form and Arg/Glu/Asp-rich domain) with CPSF6 (via Arg/Ser-rich domain); this interaction mediates, at least in part, the interaction between the CFIm and CPSF complexes and may be inhibited by CPSF6 hyper-phosphorylation. Interacts (preferentially via unphosphorylated form and Arg/Asp/Glu-rich domain) with CPSF7 (via Arg/Ser-rich domain); this interaction mediates, at least in part, the interaction between the CFIm and CPSF complexes and may be inhibited by CPSF7 hyper-phosphorylation.

Its subcellular location is the nucleus. Its function is as follows. Component of the cleavage and polyadenylation specificity factor (CPSF) complex that plays a key role in pre-mRNA 3'-end formation, recognizing the AAUAAA signal sequence and interacting with poly(A) polymerase and other factors to bring about cleavage and poly(A) addition. FIP1L1 contributes to poly(A) site recognition and stimulates poly(A) addition. Binds to U-rich RNA sequence elements surrounding the poly(A) site. May act to tether poly(A) polymerase to the CPSF complex. This is Pre-mRNA 3'-end-processing factor FIP1 (Fip1l1) from Mus musculus (Mouse).